The primary structure comprises 330 residues: Thioredoxin domain-containing protein 6 (330 aa).

Positions 11 to 115 (QVNISTQELW…QKTILDQLEA (105 aa)) constitute a Thioredoxin domain. An NDK region spans residues 157 to 303 (ERTCTLAIIK…LFPSLKFSDK (147 aa)). A disordered region spans residues 300–330 (FSDKDTEAPQGGEAEATAGPTEALCFPEDVD). Positions 307-322 (APQGGEAEATAGPTEA) are enriched in low complexity.

The protein belongs to the NDK family. Monomer and homodimer. Detected at very low levels in testis, lung and brain.

It is found in the cytoplasm. Its subcellular location is the cytoskeleton. The protein localises to the cilium axoneme. It localises to the dynein axonemal particle. Functionally, may be a regulator of microtubule physiology. The polypeptide is Thioredoxin domain-containing protein 6 (Homo sapiens (Human)).